The following is a 421-amino-acid chain: MVADVLLTHFNQLFCLNDPGHPLTGQEMKKATIVEDGYIAIKDGLIVALGSGEPDAELVGPQTIMRSYKGKIATPGIIDCHTHLVYGGSREHEFAKKLAGVSYLDILAQGGGILSTVRATRSASFDNLYQKSKRLLDYMLLHGVTTVEAKSGYGLDWETEKRQLDVVAALEKDHPIDLVSTFMAAHAIPEEYKGNPKAYLDVIIKDMLPVVKEENLAEFCDIFCEKNVFTADESRYLLSKAKEMGFKLRIHADEIASIGGVDVAAELSAVSAEHLMMITNDDIAKLIGAGVIGNLLPATTFSLMEDTYAPARKMIDAGMAITLSTDSNPGSCPTANMQFVMQLGCFMLRLTPIEVLNAVTINAAYSVNRQERVGSLTVGKEADIAIFDAPNIDYPFYFFATNLIHQVYKKGQLTVDRGRIL.

Fe(3+) contacts are provided by His-81 and His-83. Residues His-81 and His-83 each contribute to the Zn(2+) site. The 4-imidazolone-5-propanoate site is built by Arg-90, Tyr-153, and His-186. Tyr-153 contacts N-formimidoyl-L-glutamate. Fe(3+) is bound at residue His-251. A Zn(2+)-binding site is contributed by His-251. Glu-254 is a 4-imidazolone-5-propanoate binding site. Fe(3+) is bound at residue Asp-326. Asp-326 is a Zn(2+) binding site. Asn-328 and Gly-330 together coordinate N-formimidoyl-L-glutamate. Ser-331 is a 4-imidazolone-5-propanoate binding site.

Belongs to the metallo-dependent hydrolases superfamily. HutI family. Zn(2+) is required as a cofactor. It depends on Fe(3+) as a cofactor.

Its subcellular location is the cytoplasm. The catalysed reaction is 4-imidazolone-5-propanoate + H2O = N-formimidoyl-L-glutamate. It functions in the pathway amino-acid degradation; L-histidine degradation into L-glutamate; N-formimidoyl-L-glutamate from L-histidine: step 3/3. Its function is as follows. Catalyzes the hydrolytic cleavage of the carbon-nitrogen bond in imidazolone-5-propanoate to yield N-formimidoyl-L-glutamate. It is the third step in the universal histidine degradation pathway. The sequence is that of Imidazolonepropionase from Streptococcus pyogenes serotype M12 (strain MGAS2096).